We begin with the raw amino-acid sequence, 673 residues long: Protein kinase ORF74 (673 aa).

The region spanning 128 to 404 is the Protein kinase domain; that stretch reads TDTDEAVARG…ARELLVYPRY (277 aa). Catalysis depends on Asp252, which acts as the Proton acceptor. A disordered region spans residues 340–364; the sequence is MDNDALDSRRTGRDGDPVNPEGFGT. Residues 345–355 show a composition bias toward basic and acidic residues; the sequence is LDSRRTGRDGD.

It belongs to the protein kinase superfamily. Ser/Thr protein kinase family.

It catalyses the reaction L-seryl-[protein] + ATP = O-phospho-L-seryl-[protein] + ADP + H(+). It carries out the reaction L-threonyl-[protein] + ATP = O-phospho-L-threonyl-[protein] + ADP + H(+). The polypeptide is Protein kinase ORF74 (ORF74) (Ictalurid herpesvirus 1 (strain Auburn) (IcHV-1)).